The following is a 565-amino-acid chain: Adenine deaminase (565 aa).

This sequence belongs to the metallo-dependent hydrolases superfamily. Adenine deaminase family. It depends on Mn(2+) as a cofactor.

It carries out the reaction adenine + H2O + H(+) = hypoxanthine + NH4(+). This Methylobacterium nodulans (strain LMG 21967 / CNCM I-2342 / ORS 2060) protein is Adenine deaminase.